A 433-amino-acid polypeptide reads, in one-letter code: Serine--tRNA ligase (433 aa).

Position 235–237 (235–237 (TSE)) interacts with L-serine. An ATP-binding site is contributed by 266–268 (RSE). Glu-289 is a binding site for L-serine. 353–356 (EISS) provides a ligand contact to ATP. Ser-388 lines the L-serine pocket.

Belongs to the class-II aminoacyl-tRNA synthetase family. Type-1 seryl-tRNA synthetase subfamily. In terms of assembly, homodimer. The tRNA molecule binds across the dimer.

The protein resides in the cytoplasm. It catalyses the reaction tRNA(Ser) + L-serine + ATP = L-seryl-tRNA(Ser) + AMP + diphosphate + H(+). The catalysed reaction is tRNA(Sec) + L-serine + ATP = L-seryl-tRNA(Sec) + AMP + diphosphate + H(+). It functions in the pathway aminoacyl-tRNA biosynthesis; selenocysteinyl-tRNA(Sec) biosynthesis; L-seryl-tRNA(Sec) from L-serine and tRNA(Sec): step 1/1. Catalyzes the attachment of serine to tRNA(Ser). Is also able to aminoacylate tRNA(Sec) with serine, to form the misacylated tRNA L-seryl-tRNA(Sec), which will be further converted into selenocysteinyl-tRNA(Sec). This is Serine--tRNA ligase from Burkholderia cenocepacia (strain HI2424).